A 146-amino-acid polypeptide reads, in one-letter code: Negative cofactor 2 complex subunit beta (146 aa).

The disordered stretch occupies residues 124 to 146 (FRQSRSRLHHNSVSDPVKSEDSS). Residues serine 135, serine 137, and serine 142 each carry the phosphoserine modification.

In terms of assembly, component of the NC2 (negative cofactor 2) complex composed of BUR6 and NCB2. The NC2 complex associates with SPT15/TBP. Interacts with SPT15/TBP.

The protein localises to the nucleus. Component of the NC2 complex which represses RNA polymerase II transcription through binding to SPT15/TBP and thereby inhibiting the assembly of the preinitiation complex. The NC2 complex may also mediate transcriptional activation from TATA-driven promoters through association with SPT15/TBP. In Saccharomyces cerevisiae (strain ATCC 204508 / S288c) (Baker's yeast), this protein is Negative cofactor 2 complex subunit beta (NCB2).